A 381-amino-acid polypeptide reads, in one-letter code: MAKRDYYEVLGVGKNASDDEIKKAYRKLAMKYHPDRNPEGKDGKIAEEKFKEVKEAYEMLSDPEKKAAYDQYGHAGVDPNMAGGFGGAQGYGGFAEAFGDIFGDIFGQQAGGRRGGGGPQAYRGADLRYSMEISLEQAAHGHEAQIRVPHWDDCDHCHGNGAEPGSSVETCPTCHGAGQVRVSQGFFTMQQTCPKCHGSGKYIPKPCTKCHGQGKLKSQKTLEVKIPAGIDEGMRIRSSGNGEPGINGGPPGDLYVEVHIKAHPMFERDGDDLHCQMPISFATAALGGDLEVPTLSGKATFPVPEATQSGKTFRLRGKGIKGVRSGYPGDLYVHVNVETPVKLTEAQKEMLRQFDRSVHEGGSRHSPQEQSWLDKVKSFFS.

In terms of domain architecture, J spans 5 to 73 (DYYEVLGVGK…EKKAAYDQYG (69 aa)). Residues 141-219 (GHEAQIRVPH…CHGQGKLKSQ (79 aa)) form a CR-type zinc finger. Positions 154, 157, 171, 174, 193, 196, 207, and 210 each coordinate Zn(2+). CXXCXGXG motif repeat units lie at residues 154–161 (CDHCHGNG), 171–178 (CPTCHGAG), 193–200 (CPKCHGSG), and 207–214 (CTKCHGQG). The disordered stretch occupies residues 357-381 (SVHEGGSRHSPQEQSWLDKVKSFFS).

It belongs to the DnaJ family. As to quaternary structure, homodimer. Requires Zn(2+) as cofactor.

The protein resides in the cytoplasm. Participates actively in the response to hyperosmotic and heat shock by preventing the aggregation of stress-denatured proteins and by disaggregating proteins, also in an autonomous, DnaK-independent fashion. Unfolded proteins bind initially to DnaJ; upon interaction with the DnaJ-bound protein, DnaK hydrolyzes its bound ATP, resulting in the formation of a stable complex. GrpE releases ADP from DnaK; ATP binding to DnaK triggers the release of the substrate protein, thus completing the reaction cycle. Several rounds of ATP-dependent interactions between DnaJ, DnaK and GrpE are required for fully efficient folding. Also involved, together with DnaK and GrpE, in the DNA replication of plasmids through activation of initiation proteins. The protein is Chaperone protein DnaJ of Cupriavidus necator (strain ATCC 17699 / DSM 428 / KCTC 22496 / NCIMB 10442 / H16 / Stanier 337) (Ralstonia eutropha).